Consider the following 241-residue polypeptide: Ribosomal RNA large subunit methyltransferase E (241 aa).

Residues G88, W90, D111, D127, and D151 each coordinate S-adenosyl-L-methionine. The active-site Proton acceptor is K191.

It belongs to the class I-like SAM-binding methyltransferase superfamily. RNA methyltransferase RlmE family.

The protein localises to the cytoplasm. It catalyses the reaction uridine(2552) in 23S rRNA + S-adenosyl-L-methionine = 2'-O-methyluridine(2552) in 23S rRNA + S-adenosyl-L-homocysteine + H(+). Specifically methylates the uridine in position 2552 of 23S rRNA at the 2'-O position of the ribose in the fully assembled 50S ribosomal subunit. This chain is Ribosomal RNA large subunit methyltransferase E, found in Bartonella quintana (strain Toulouse) (Rochalimaea quintana).